A 154-amino-acid chain; its full sequence is Large ribosomal subunit protein uL30 (154 aa).

Residues 122-141 (RGGHDGIKTPASDGGQLGKH) form a disordered region.

This sequence belongs to the universal ribosomal protein uL30 family. Part of the 50S ribosomal subunit.

This Halobacterium salinarum (strain ATCC 29341 / DSM 671 / R1) protein is Large ribosomal subunit protein uL30.